Reading from the N-terminus, the 649-residue chain is MVAKKGRRDSSDSSPIVEVGEIDTSAPFQSVKDAVNLFGEAAFSAEKPVFRKPNPQSAEKVLVKQTELHLAQKELNKLKEQLKNAETIREQALSELEWSKRTVDELTRKLEAVNESRDSANKATEAAKSLIEEAKPGNVSVASSSDAQTRDMEEYGEVCKELDTAKQELRKIRQVSNEILETKTVALSKVEEAKKVSKVHSEKIELLRKEIAAVNESVEQTKLACSQARKEQSEIFAEKEIQQKSYKAGMEESAKKSLALKNEFDPEFAKKLEVQLTETYNEIDELQKQMETAKASDIDSVNGVSLELNEAKGLFEKLVEEEKSLQELVESLKAELKNVKMEHDEVEAKEAEIESVAGDLHLKLSRSKSELEQCVTEESKAKAALEDMMLTINQISSETEAARREAEGMRNKAKELMKEAESAHLALEDSELHLRVALDEAEEAKAAETKALEQIKSMSEKTNAARNSTSSESGSQSITLSQEEFKSLSKRAEVFDKLAEMKVAAALAQVEAVRASENETLKKLETTQEEIKKLKTATEEALKKAAMADAAKKAVEGELRRWRERDQKKAEEAATRILAEAEMKMASESSPQQHYKAPKQKPVNNKLEKTKTSVVSKKVLMPNLSGIFNRKKNQVEWGSPSYLPGEKPF.

3 coiled-coil regions span residues 59-227 (EKVL…ACSQ), 267-356 (EFAK…IESV), and 391-461 (TINQ…MSEK). Basic and acidic residues predominate over residues 443 to 453 (EAKAAETKALE). A disordered region spans residues 443–483 (EAKAAETKALEQIKSMSEKTNAARNSTSSESGSQSITLSQE). Polar residues predominate over residues 456–467 (KSMSEKTNAARN). The span at 468-482 (STSSESGSQSITLSQ) shows a compositional bias: low complexity. Positions 505 to 549 (AALAQVEAVRASENETLKKLETTQEEIKKLKTATEEALKKAAMAD) form a coiled coil. The tract at residues 583 to 611 (MKMASESSPQQHYKAPKQKPVNNKLEKTK) is disordered.

Belongs to the WEB family.

The polypeptide is WEB family protein At5g55860 (Arabidopsis thaliana (Mouse-ear cress)).